Here is a 61-residue protein sequence, read N- to C-terminus: Small ribosomal subunit protein eS31 (61 aa).

Residues Cys-22, Cys-25, Cys-38, and Cys-41 each contribute to the Zn(2+) site. The segment at Cys-22–Cys-41 adopts a C4-type zinc-finger fold.

The protein belongs to the eukaryotic ribosomal protein eS31 family. As to quaternary structure, part of the 30S ribosomal subunit. Requires Zn(2+) as cofactor.

This chain is Small ribosomal subunit protein eS31, found in Nanoarchaeum equitans (strain Kin4-M).